Consider the following 118-residue polypeptide: UPF0102 protein ROP_66030 (118 aa).

The protein belongs to the UPF0102 family.

This Rhodococcus opacus (strain B4) protein is UPF0102 protein ROP_66030.